The following is a 641-amino-acid chain: 1-deoxy-D-xylulose-5-phosphate synthase (641 aa).

Residues H79 and 120–122 each bind thiamine diphosphate; that span reads GHS. D151 is a binding site for Mg(2+). Thiamine diphosphate-binding positions include 152 to 153, N180, Y290, and E372; that span reads GS. A Mg(2+)-binding site is contributed by N180.

Belongs to the transketolase family. DXPS subfamily. As to quaternary structure, homodimer. The cofactor is Mg(2+). Thiamine diphosphate is required as a cofactor.

The catalysed reaction is D-glyceraldehyde 3-phosphate + pyruvate + H(+) = 1-deoxy-D-xylulose 5-phosphate + CO2. It participates in metabolic intermediate biosynthesis; 1-deoxy-D-xylulose 5-phosphate biosynthesis; 1-deoxy-D-xylulose 5-phosphate from D-glyceraldehyde 3-phosphate and pyruvate: step 1/1. Its function is as follows. Catalyzes the acyloin condensation reaction between C atoms 2 and 3 of pyruvate and glyceraldehyde 3-phosphate to yield 1-deoxy-D-xylulose-5-phosphate (DXP). This is 1-deoxy-D-xylulose-5-phosphate synthase from Rhodopseudomonas palustris (strain TIE-1).